The primary structure comprises 277 residues: Energy-coupling factor transporter ATP-binding protein EcfA1 (277 aa).

The region spanning 5–240 (LEVENLVFKY…SEDMVEIGLD (236 aa)) is the ABC transporter domain. Residue 40 to 47 (GQNGSGKS) participates in ATP binding. Glu166 serves as the catalytic Proton acceptor.

It belongs to the ABC transporter superfamily. Energy-coupling factor EcfA family. In terms of assembly, forms a stable energy-coupling factor (ECF) transporter complex composed of 2 membrane-embedded substrate-binding proteins (S component), 2 ATP-binding proteins (A component) and 2 transmembrane proteins (T component). In L.lactis forms a stable complex with EcfA' and EcfT and substrate-binding components. In E.coli forms a stable complex with EcfA', EcfT and individually with 3 tested substrate-binding components (BioY, NiaX and ThiT) with a stoichiometry of 1.1:1:1. The core ECF complex interacts with a number of substrate-specific binding components, including BioY, BioY2, HmpT, NiaX, PanT, QueT, RibU and ThiT.

The protein resides in the cell membrane. In terms of biological role, ATP-binding (A) component of a common energy-coupling factor (ECF) ABC-transporter complex. Unlike classic ABC transporters this ECF transporter provides the energy necessary to transport a number of different substrates. In this organism these probably include biotin, thiamine precursor, niacin, pantothenic acid, queuosine precursor, riboflavin and thiamine. Uptake of niacin or riboflavin into proteosomes containing EcfA1A2T and Niax or RibU has been demonstrated. Uptake requires hydrolyzable Mg-ATP and is substrate-specific; NiaX-containing proteosomes did not transport riboflavin. This is Energy-coupling factor transporter ATP-binding protein EcfA1 from Lactococcus lactis subsp. cremoris (strain MG1363).